The chain runs to 182 residues: Testis development-related protein (182 aa).

Disordered regions lie at residues 1–71 (MWKL…TNVR) and 117–152 (TDHTEDGISSLPPWSAWEDDTKGSTKYTSLASSASS). At Ser-7 the chain carries Phosphoserine. Residues 22 to 37 (RGASPASAAAQAPGAS) are compositionally biased toward low complexity. Over residues 49–58 (NKDDEERLLE) the composition is skewed to basic and acidic residues. A compositionally biased stretch (polar residues) spans 59–68 (TSRSSKSKGT).

The protein belongs to the TDRP family. As to quaternary structure, interacts with PRM2. Predominantly expressed in testis.

It is found in the nucleus. The protein localises to the cytoplasm. Contributes to normal sperm motility, but not essential for male fertility. This chain is Testis development-related protein (Tdrp), found in Rattus norvegicus (Rat).